The chain runs to 206 residues: Large ribosomal subunit protein uL4 (206 aa).

Positions 63-97 (MYKQKGTGRARHHSARAPQFRGGGKAHGPVVRSHE) are disordered. The segment covering 64 to 77 (YKQKGTGRARHHSA) has biased composition (basic residues).

The protein belongs to the universal ribosomal protein uL4 family. Part of the 50S ribosomal subunit.

Functionally, one of the primary rRNA binding proteins, this protein initially binds near the 5'-end of the 23S rRNA. It is important during the early stages of 50S assembly. It makes multiple contacts with different domains of the 23S rRNA in the assembled 50S subunit and ribosome. In terms of biological role, forms part of the polypeptide exit tunnel. The sequence is that of Large ribosomal subunit protein uL4 from Rhizobium etli (strain CIAT 652).